The sequence spans 229 residues: Triosephosphate isomerase (229 aa).

9-11 (NLK) contacts substrate. The active-site Electrophile is H93. The Proton acceptor role is filled by E141. Residues I146, G181, and 202–203 (AS) contribute to the substrate site.

Belongs to the triosephosphate isomerase family. Homotetramer; dimer of dimers.

It localises to the cytoplasm. The catalysed reaction is D-glyceraldehyde 3-phosphate = dihydroxyacetone phosphate. It functions in the pathway carbohydrate biosynthesis; gluconeogenesis. It participates in carbohydrate degradation; glycolysis; D-glyceraldehyde 3-phosphate from glycerone phosphate: step 1/1. Involved in the gluconeogenesis. Catalyzes stereospecifically the conversion of dihydroxyacetone phosphate (DHAP) to D-glyceraldehyde-3-phosphate (G3P). The protein is Triosephosphate isomerase of Pyrobaculum islandicum (strain DSM 4184 / JCM 9189 / GEO3).